The primary structure comprises 116 residues: MAAAAFDPLGPLPVYLVSVRLGIYEDEHHRVWIVANVETSHSSHGNRRRTHVTVHLWKLIPQQVIPFNPLNYDFLPTTWKLESRNIYWATDGTHWRLLDHSQLGDTEQLILMLVLG.

Belongs to the TCL1 family.

The chain is Protein TCL1B1 (Tcl1b1) from Mus musculus (Mouse).